Consider the following 372-residue polypeptide: Alanine racemase (372 aa).

Residue Lys-37 is the Proton acceptor; specific for D-alanine of the active site. The residue at position 37 (Lys-37) is an N6-(pyridoxal phosphate)lysine. A substrate-binding site is contributed by Arg-136. Catalysis depends on Tyr-265, which acts as the Proton acceptor; specific for L-alanine. Met-313 is a binding site for substrate.

Belongs to the alanine racemase family. Pyridoxal 5'-phosphate is required as a cofactor.

It carries out the reaction L-alanine = D-alanine. Its pathway is amino-acid biosynthesis; D-alanine biosynthesis; D-alanine from L-alanine: step 1/1. Catalyzes the interconversion of L-alanine and D-alanine. May also act on other amino acids. This Synechocystis sp. (strain ATCC 27184 / PCC 6803 / Kazusa) protein is Alanine racemase (alr).